A 352-amino-acid chain; its full sequence is DNA polymerase IV (352 aa).

In terms of domain architecture, UmuC spans 3–187; the sequence is VLFVDFDYFY…LDIADVPGIG (185 aa). Mg(2+) is bound by residues D7 and D105. Residue E106 is part of the active site.

It belongs to the DNA polymerase type-Y family. As to quaternary structure, monomer. Interacts with the PCNA heterotrimer via PCNA1. Requires Mg(2+) as cofactor.

The protein resides in the cytoplasm. It carries out the reaction DNA(n) + a 2'-deoxyribonucleoside 5'-triphosphate = DNA(n+1) + diphosphate. Its function is as follows. Poorly processive, error-prone DNA polymerase involved in untargeted mutagenesis. Copies undamaged DNA at stalled replication forks, which arise in vivo from mismatched or misaligned primer ends. These misaligned primers can be extended by PolIV. Exhibits no 3'-5' exonuclease (proofreading) activity. It is involved in translesional synthesis. In Saccharolobus solfataricus (strain ATCC 35092 / DSM 1617 / JCM 11322 / P2) (Sulfolobus solfataricus), this protein is DNA polymerase IV (dbh).